The primary structure comprises 87 residues: MKTLLLTLVVVTIVCLDLGYTMKCKICHFDTCRAGELKVCASGEKYCFKESWREARGTRIERGCAATCPKGSVYGLYVLCCTTDDCN.

Residues 1–21 form the signal peptide; it reads MKTLLLTLVVVTIVCLDLGYT. Cystine bridges form between Cys24–Cys47, Cys27–Cys32, Cys40–Cys64, Cys68–Cys80, and Cys81–Cys86.

In terms of tissue distribution, expressed by the venom gland.

The protein localises to the secreted. In terms of biological role, inhibits carbachol-induced muscle contraction in a reversible manner. This is Long neurotoxin homolog from Bungarus multicinctus (Many-banded krait).